Here is a 440-residue protein sequence, read N- to C-terminus: Sialyltransferase-like protein 2 (440 aa).

At M1 to H5 the chain is on the cytoplasmic side. A helical; Signal-anchor for type II membrane protein membrane pass occupies residues L6 to V26. Residues S27–D440 are Lumenal-facing. N113 and N149 each carry an N-linked (GlcNAc...) asparagine glycan.

The protein belongs to the glycosyltransferase 29 family.

The protein resides in the golgi apparatus membrane. Its function is as follows. May be involved in the transfer of 2-keto-3-deoxy-D-lyxo-heptulosaric acid (Dha) and/or 2-keto-3-deoxy-D-manno-octulosonic acid (Kdo) on the homogalacturonan backbone of rhamnogalacturonan-II. Required for efficient pollen grain germination and pollen tube elongation. Does not possess sialyltransferase activity in vitro. The polypeptide is Sialyltransferase-like protein 2 (Arabidopsis thaliana (Mouse-ear cress)).